We begin with the raw amino-acid sequence, 153 residues long: Methylglyoxal synthase (153 aa).

The MGS-like domain maps to 6 to 153; the sequence is RTIAARKHIA…QRYLAERLPS (148 aa). Residues His19, Lys23, 45–48, and 65–66 each bind substrate; these read TGTT and SG. Catalysis depends on Asp71, which acts as the Proton donor/acceptor. Substrate is bound at residue His98.

This sequence belongs to the methylglyoxal synthase family.

It catalyses the reaction dihydroxyacetone phosphate = methylglyoxal + phosphate. Its function is as follows. Catalyzes the formation of methylglyoxal from dihydroxyacetone phosphate. The chain is Methylglyoxal synthase from Sodalis glossinidius (strain morsitans).